A 359-amino-acid polypeptide reads, in one-letter code: Phospho-N-acetylmuramoyl-pentapeptide-transferase (359 aa).

10 helical membrane passes run 26–46 (TIYGGLTAFLICFLLGPWVIN), 73–93 (TMGGILILFSLGVSTLLWADL), 98–118 (ILITLLSMLLFGAIGFIDDYL), 134–154 (FLVQIMAGLVISYLVYLCPDF), 166–186 (FTPDLGIWYIPFATLVIVGTS), 197–217 (GLAIGPIIIAGVTYMIFAYVA), 234–254 (CGEITIVCGILAGAGLGFLWF), 261–281 (VFMGDTGSIPLGAILGTIAVI), 286–306 (ILLLVVGGLFVIEALSVIIQV), and 338–358 (IVRFWIIAITLALISLSTLKI).

The protein belongs to the glycosyltransferase 4 family. MraY subfamily. It depends on Mg(2+) as a cofactor.

It localises to the cell inner membrane. It carries out the reaction UDP-N-acetyl-alpha-D-muramoyl-L-alanyl-gamma-D-glutamyl-meso-2,6-diaminopimeloyl-D-alanyl-D-alanine + di-trans,octa-cis-undecaprenyl phosphate = di-trans,octa-cis-undecaprenyl diphospho-N-acetyl-alpha-D-muramoyl-L-alanyl-D-glutamyl-meso-2,6-diaminopimeloyl-D-alanyl-D-alanine + UMP. It functions in the pathway cell wall biogenesis; peptidoglycan biosynthesis. Catalyzes the initial step of the lipid cycle reactions in the biosynthesis of the cell wall peptidoglycan: transfers peptidoglycan precursor phospho-MurNAc-pentapeptide from UDP-MurNAc-pentapeptide onto the lipid carrier undecaprenyl phosphate, yielding undecaprenyl-pyrophosphoryl-MurNAc-pentapeptide, known as lipid I. In Desulforapulum autotrophicum (strain ATCC 43914 / DSM 3382 / VKM B-1955 / HRM2) (Desulfobacterium autotrophicum), this protein is Phospho-N-acetylmuramoyl-pentapeptide-transferase.